We begin with the raw amino-acid sequence, 122 residues long: Small ribosomal subunit protein uS13 (122 aa).

The disordered stretch occupies residues 99 to 122; that stretch reads RGQRTHTNARTRKGPAKAIAGKKK.

It belongs to the universal ribosomal protein uS13 family. In terms of assembly, part of the 30S ribosomal subunit. Forms a loose heterodimer with protein S19. Forms two bridges to the 50S subunit in the 70S ribosome.

Functionally, located at the top of the head of the 30S subunit, it contacts several helices of the 16S rRNA. In the 70S ribosome it contacts the 23S rRNA (bridge B1a) and protein L5 of the 50S subunit (bridge B1b), connecting the 2 subunits; these bridges are implicated in subunit movement. Contacts the tRNAs in the A and P-sites. The sequence is that of Small ribosomal subunit protein uS13 from Rhodopseudomonas palustris (strain HaA2).